The sequence spans 103 residues: NADH-quinone oxidoreductase subunit K (103 aa).

3 helical membrane-spanning segments follow: residues 6-26 (LSHFLILGAILFAISVVGIFL), 32-52 (LVLLMAIELMLLAVNMNFVAF), and 63-83 (IFVFFILTVAAAESAIGLAIL).

The protein belongs to the complex I subunit 4L family. As to quaternary structure, NDH-1 is composed of 14 different subunits. Subunits NuoA, H, J, K, L, M, N constitute the membrane sector of the complex.

The protein localises to the cell inner membrane. The catalysed reaction is a quinone + NADH + 5 H(+)(in) = a quinol + NAD(+) + 4 H(+)(out). Its function is as follows. NDH-1 shuttles electrons from NADH, via FMN and iron-sulfur (Fe-S) centers, to quinones in the respiratory chain. The immediate electron acceptor for the enzyme in this species is believed to be ubiquinone. Couples the redox reaction to proton translocation (for every two electrons transferred, four hydrogen ions are translocated across the cytoplasmic membrane), and thus conserves the redox energy in a proton gradient. This is NADH-quinone oxidoreductase subunit K from Dechloromonas aromatica (strain RCB).